The chain runs to 301 residues: Methionyl-tRNA formyltransferase (301 aa).

Residue 110–113 (SLLP) coordinates (6S)-5,6,7,8-tetrahydrofolate.

The protein belongs to the Fmt family.

It carries out the reaction L-methionyl-tRNA(fMet) + (6R)-10-formyltetrahydrofolate = N-formyl-L-methionyl-tRNA(fMet) + (6S)-5,6,7,8-tetrahydrofolate + H(+). In terms of biological role, attaches a formyl group to the free amino group of methionyl-tRNA(fMet). The formyl group appears to play a dual role in the initiator identity of N-formylmethionyl-tRNA by promoting its recognition by IF2 and preventing the misappropriation of this tRNA by the elongation apparatus. The protein is Methionyl-tRNA formyltransferase of Anaplasma phagocytophilum (strain HZ).